A 319-amino-acid chain; its full sequence is Sulfate adenylyltransferase subunit 2 (319 aa).

Disordered regions lie at residues 1 to 22 and 296 to 319; these read MNPG…TRRP and RGAT…EGYF.

It belongs to the PAPS reductase family. CysD subfamily.

The enzyme catalyses sulfate + ATP + H(+) = adenosine 5'-phosphosulfate + diphosphate. It participates in antibiotic biosynthesis; mitomycin C biosynthesis. Functionally, with CysN forms the ATP sulfurylase (ATPS) that catalyzes the adenylation of sulfate producing adenosine 5'-phosphosulfate (APS) and diphosphate, the first enzymatic step in sulfur assimilation pathway. APS synthesis involves the formation of a high-energy phosphoric-sulfuric acid anhydride bond driven by GTP hydrolysis by CysN coupled to ATP hydrolysis by CysD. This chain is Sulfate adenylyltransferase subunit 2 (mmcV), found in Streptomyces lavendulae.